The sequence spans 333 residues: D-fructose 1,6-bisphosphatase class 2/sedoheptulose 1,7-bisphosphatase (333 aa).

Mn(2+)-binding residues include D33, E57, D85, and E88. Substrate contacts are provided by residues E88–T90, Y119, R164–R166, and D186–D188. E213 is a Mn(2+) binding site.

The protein belongs to the FBPase class 2 family. In terms of assembly, homotetramer. Requires Mn(2+) as cofactor.

The enzyme catalyses beta-D-fructose 1,6-bisphosphate + H2O = beta-D-fructose 6-phosphate + phosphate. It carries out the reaction D-sedoheptulose 1,7-bisphosphate + H2O = D-sedoheptulose 7-phosphate + phosphate. The protein operates within carbohydrate biosynthesis; Calvin cycle. Functionally, catalyzes the hydrolysis of fructose 1,6-bisphosphate (Fru 1,6-P2) and sedoheptulose 1,7-bisphosphate (Sed 1,7-P2) to fructose 6-phosphate and sedoheptulose 7-phosphate, respectively. The sequence is that of D-fructose 1,6-bisphosphatase class 2/sedoheptulose 1,7-bisphosphatase from Prochlorococcus marinus (strain MIT 9301).